Here is a 481-residue protein sequence, read N- to C-terminus: Proline--tRNA ligase (481 aa).

The protein belongs to the class-II aminoacyl-tRNA synthetase family. ProS type 3 subfamily. As to quaternary structure, homodimer.

Its subcellular location is the cytoplasm. It carries out the reaction tRNA(Pro) + L-proline + ATP = L-prolyl-tRNA(Pro) + AMP + diphosphate. In terms of biological role, catalyzes the attachment of proline to tRNA(Pro) in a two-step reaction: proline is first activated by ATP to form Pro-AMP and then transferred to the acceptor end of tRNA(Pro). This is Proline--tRNA ligase from Prosthecochloris aestuarii (strain DSM 271 / SK 413).